Consider the following 994-residue polypeptide: Alpha-mannosidase F (994 aa).

A signal peptide spans 1-20; sequence MKNFYYFILILLFFNEVCYS. The Zn(2+) site is built by H35, D37, and D151. D151 (nucleophile) is an active-site residue. Residues N247 and N381 are each glycosylated (N-linked (GlcNAc...) asparagine). Zn(2+) is bound at residue H392. N-linked (GlcNAc...) asparagine glycans are attached at residues N554, N712, and N932.

The protein belongs to the glycosyl hydrolase 38 family. The cofactor is Zn(2+).

The protein resides in the secreted. It carries out the reaction Hydrolysis of terminal, non-reducing alpha-D-mannose residues in alpha-D-mannosides.. In Dictyostelium discoideum (Social amoeba), this protein is Alpha-mannosidase F (manF).